A 308-amino-acid polypeptide reads, in one-letter code: uncharacterized protein (308 aa).

Positions 19–43 (EPQASGAGPAQTPPPVTVPMTPPSK) are disordered. Pro residues predominate over residues 29–43 (QTPPPVTVPMTPPSK).

This is an uncharacterized protein from Deinococcus radiodurans (strain ATCC 13939 / DSM 20539 / JCM 16871 / CCUG 27074 / LMG 4051 / NBRC 15346 / NCIMB 9279 / VKM B-1422 / R1).